A 421-amino-acid chain; its full sequence is MDIKQYMKEVGQRARKASRAMAKADTAAKNQALSLIAAAIRRDADILRAANQVDLVAARLNGLEPAMLDRLTLSDKAIATMAEGLEQIVALPDPIGEISNMKYRPTGIQVGQMRVPLGVIGIIYEARPNVTVDAAGLCIKSGNATILRGGSEAIHCNQALAKLVSEGLAGAGLPADAVQIVETTDRAAVGELITMPEYVDVIVPRGGKGLIERLMKESKVPMIKHLDGICHVYIDDKADPAKALDIAFNAKCHRYGTCNTMETLLVARAIAPTILPALAKLYATRDVELRGDDEARAILQGYAHLAAASAEDWSTEYLDAILSVKIVADMDEAIDHINTYSSKHTDSIVTEDYTRAMRFLREVDSASVMINASTRFADGFEYGLGAEIGISNDKLHARGPVGLDGLTSLKYVVFGHGEVRE.

The protein belongs to the gamma-glutamyl phosphate reductase family.

The protein localises to the cytoplasm. It carries out the reaction L-glutamate 5-semialdehyde + phosphate + NADP(+) = L-glutamyl 5-phosphate + NADPH + H(+). The protein operates within amino-acid biosynthesis; L-proline biosynthesis; L-glutamate 5-semialdehyde from L-glutamate: step 2/2. Catalyzes the NADPH-dependent reduction of L-glutamate 5-phosphate into L-glutamate 5-semialdehyde and phosphate. The product spontaneously undergoes cyclization to form 1-pyrroline-5-carboxylate. The chain is Gamma-glutamyl phosphate reductase from Herminiimonas arsenicoxydans.